The following is a 221-amino-acid chain: Immunoregulatory peptides (221 aa).

Residues 1–19 form the signal peptide; sequence MNYLCLVVTLVAVAGAISG. Residues 20–45 constitute a propeptide that is removed on maturation; it reads EKFSDDNTGYQSTPSLRIRTTPGRRR. Residues 21-155 are disordered; it reads KFSDDNTGYQ…PRTIGPPYTR (135 aa). Over residues 25-34 the composition is skewed to polar residues; that stretch reads DNTGYQSTPS. Low complexity predominate over residues 48–69; sequence PRTIGPPYTRRTLRTTTDYSTT. 2 stretches are compositionally biased toward polar residues: residues 70 to 85 and 123 to 133; these read VENGNLTTPAANSTEK and NGTTPAANSTE. Positions 191–221 are excised as a propeptide; that stretch reads EISWTFGPLYTWRTTKGYGTTLETTNATSTS.

In terms of tissue distribution, salivary glands.

The protein resides in the secreted. In terms of biological role, suppress host inflammatory response. Exerts significant anti-inflammatory functions, either by directly inhibiting host secretion of inflammatory factors such as tumor necrosis factor-alpha (TNF), monocyte chemotactic protein-1 (CCL2), and interferon-gamma (IFNG) or by indirectly increasing the secretion of immunosuppressant cytokine of interleukin-10 (IL10). Also potently scavenges free radical in vitro in a rapid manner. All tested concentrations of this peptide have little effect on the cell viability. In vivo, inhibits hind paw adjuvant-induced inflammation in mouse in a dose-dependent manner. Its function is as follows. Suppress host inflammatory response. Exerts significant anti-inflammatory functions, either by directly inhibiting host secretion of inflammatory factors such as tumor necrosis factor-alpha (TNF), monocyte chemotactic protein-1 (CCL2), and interferon-gamma (IFNG) or by indirectly increasing the secretion of immunosuppressant cytokine of interleukin-10 (IL10). Also potently scavenges free radical in vitro in a rapid manner. Low concentrations of this peptide have little effect on the cell viability, whereas high concentrations increase the cell viability by 10-20%. In vivo, inhibits hind paw adjuvant-induced inflammation in mouse in a dose-dependent manner. Not studied but probably similar to Hyalomin-B1. This is Immunoregulatory peptides from Hyalomma asiaticum asiaticum (Tick).